The primary structure comprises 403 residues: 3-hydroxy-3-methylglutaryl-coenzyme A reductase (403 aa).

Catalysis depends on charge relay system residues E99 and D303. H398 acts as the Proton donor in catalysis.

It belongs to the HMG-CoA reductase family.

It catalyses the reaction (R)-mevalonate + 2 NADP(+) + CoA = (3S)-3-hydroxy-3-methylglutaryl-CoA + 2 NADPH + 2 H(+). It participates in metabolic intermediate biosynthesis; (R)-mevalonate biosynthesis; (R)-mevalonate from acetyl-CoA: step 3/3. With respect to regulation, is competitively inhibited by (R)-HMG-CoA and lovastatin (formerly called mevinolin). Catalyzes the NADPH-dependent reductive deacylation of (S)-3-hydroxy-3-methylglutaryl-CoA (HMG-CoA) to (R)-mevalonate. Functions in the mevalonate (MVA) pathway leading to isopentenyl diphosphate (IPP), a key precursor for the biosynthesis of isoprenoid compounds such as archaeal membrane lipids. Is also able to catalyze the reduction of mevaldehyde to mevalonate and the oxidative acylation of mevaldehyde to HMG-CoA. The sequence is that of 3-hydroxy-3-methylglutaryl-coenzyme A reductase (hmgA) from Haloferax volcanii (strain ATCC 29605 / DSM 3757 / JCM 8879 / NBRC 14742 / NCIMB 2012 / VKM B-1768 / DS2) (Halobacterium volcanii).